The following is a 229-amino-acid chain: Flagellar L-ring protein (229 aa).

Positions 1–23 are cleaved as a signal peptide; it reads MNPLTRVALAVAAFAALVLALSA. The N-palmitoyl cysteine moiety is linked to residue cysteine 24. Cysteine 24 is lipidated: S-diacylglycerol cysteine.

It belongs to the FlgH family. In terms of assembly, the basal body constitutes a major portion of the flagellar organelle and consists of four rings (L,P,S, and M) mounted on a central rod.

It is found in the cell outer membrane. The protein resides in the bacterial flagellum basal body. Assembles around the rod to form the L-ring and probably protects the motor/basal body from shearing forces during rotation. In Anaeromyxobacter dehalogenans (strain 2CP-1 / ATCC BAA-258), this protein is Flagellar L-ring protein.